Consider the following 344-residue polypeptide: MAP3K12-binding inhibitory protein 1 (344 aa).

Residue S91 is modified to Phosphoserine. Residues K94, K118, K129, K139, K153, and K235 each participate in a glycyl lysine isopeptide (Lys-Gly) (interchain with G-Cter in SUMO2) cross-link. The interval 172–344 is interaction with MAP3K12; sequence AEINENNVRE…AESMATHHLP (173 aa). Residues 271 to 285 are leucine-zipper 1; it reads IYQRIKKLEDKILEL. K301 is subject to N6-acetyllysine; alternate. Residue K301 forms a Glycyl lysine isopeptide (Lys-Gly) (interchain with G-Cter in SUMO2); alternate linkage. Residues K304 and K325 each participate in a glycyl lysine isopeptide (Lys-Gly) (interchain with G-Cter in SUMO2) cross-link. A leucine-zipper 2 region spans residues 314-329; sequence LAELDEKISALKQALL.

In terms of assembly, component of the ADA2A-containing complex (ATAC), composed of KAT14, KAT2A, TADA2L, TADA3L, ZZ3, MBIP, WDR5, YEATS2, CCDC101 and DR1. In the complex, it probably interacts directly with KAT2A, KAT14 and WDR5. Ubiquitous. High expression seen in the heart and lung.

The protein localises to the nucleus. Its subcellular location is the cytoplasm. Its function is as follows. Inhibits the MAP3K12 activity to induce the activation of the JNK/SAPK pathway. Component of the ATAC complex, a complex with histone acetyltransferase activity on histones H3 and H4. This is MAP3K12-binding inhibitory protein 1 (MBIP) from Homo sapiens (Human).